Here is a 127-residue protein sequence, read N- to C-terminus: Large ribosomal subunit protein bL12 (127 aa).

The disordered stretch occupies residues 98–127 (PKPVKNGVSKEEAEEAKKQLVESGAEVEIK). A compositionally biased stretch (basic and acidic residues) spans 105 to 117 (VSKEEAEEAKKQL).

It belongs to the bacterial ribosomal protein bL12 family. In terms of assembly, homodimer. Part of the ribosomal stalk of the 50S ribosomal subunit. Forms a multimeric L10(L12)X complex, where L10 forms an elongated spine to which 2 to 4 L12 dimers bind in a sequential fashion. Binds GTP-bound translation factors.

In terms of biological role, forms part of the ribosomal stalk which helps the ribosome interact with GTP-bound translation factors. Is thus essential for accurate translation. The polypeptide is Large ribosomal subunit protein bL12 (Geobacter sulfurreducens (strain ATCC 51573 / DSM 12127 / PCA)).